A 510-amino-acid polypeptide reads, in one-letter code: ATP synthase subunit alpha (510 aa).

Residue 169 to 176 participates in ATP binding; the sequence is GDRQTGKT.

This sequence belongs to the ATPase alpha/beta chains family. As to quaternary structure, F-type ATPases have 2 components, CF(1) - the catalytic core - and CF(0) - the membrane proton channel. CF(1) has five subunits: alpha(3), beta(3), gamma(1), delta(1), epsilon(1). CF(0) has three main subunits: a(1), b(2) and c(9-12). The alpha and beta chains form an alternating ring which encloses part of the gamma chain. CF(1) is attached to CF(0) by a central stalk formed by the gamma and epsilon chains, while a peripheral stalk is formed by the delta and b chains.

The protein resides in the cell inner membrane. It catalyses the reaction ATP + H2O + 4 H(+)(in) = ADP + phosphate + 5 H(+)(out). Functionally, produces ATP from ADP in the presence of a proton gradient across the membrane. The alpha chain is a regulatory subunit. The sequence is that of ATP synthase subunit alpha from Methylobacterium radiotolerans (strain ATCC 27329 / DSM 1819 / JCM 2831 / NBRC 15690 / NCIMB 10815 / 0-1).